Reading from the N-terminus, the 124-residue chain is UPF0102 protein tll1737 (124 aa).

It belongs to the UPF0102 family.

This chain is UPF0102 protein tll1737, found in Thermosynechococcus vestitus (strain NIES-2133 / IAM M-273 / BP-1).